A 166-amino-acid chain; its full sequence is EEF1A lysine methyltransferase 1 (166 aa).

It belongs to the class I-like SAM-binding methyltransferase superfamily. EFM5 family.

It localises to the cytoplasm. It carries out the reaction L-lysyl-[protein] + 3 S-adenosyl-L-methionine = N(6),N(6),N(6)-trimethyl-L-lysyl-[protein] + 3 S-adenosyl-L-homocysteine + 3 H(+). Protein-lysine methyltransferase that selectively catalyzes the trimethylation of EEF1A at 'Lys-79'. This Danio rerio (Zebrafish) protein is EEF1A lysine methyltransferase 1.